A 686-amino-acid polypeptide reads, in one-letter code: tRNA wybutosine-synthesizing protein 4 (686 aa).

The disordered stretch occupies residues 1–22; that stretch reads MGPRSRQRRTGTVQSTNDSSSL. The segment covering 10 to 22 has biased composition (polar residues); it reads TGTVQSTNDSSSL. S-adenosyl-L-methionine is bound by residues arginine 59, glycine 89, aspartate 114, 161–162, and glutamate 188; that span reads DL.

This sequence belongs to the methyltransferase superfamily. LCMT family. Interacts with RNF144B/IBRDC2.

It catalyses the reaction 7-[(3S)-3-amino-3-carboxypropyl]wyosine(37) in tRNA(Phe) + S-adenosyl-L-methionine = 7-[(3S)-(3-amino-3-methoxycarbonyl)propyl]wyosine(37) in tRNA(Phe) + S-adenosyl-L-homocysteine. The catalysed reaction is 7-[(3S)-(3-amino-3-methoxycarbonyl)propyl]wyosine(37) in tRNA(Phe) + S-adenosyl-L-methionine + CO2 = wybutosine(37) in tRNA(Phe) + S-adenosyl-L-homocysteine + 2 H(+). It functions in the pathway tRNA modification; wybutosine-tRNA(Phe) biosynthesis. In terms of biological role, probable S-adenosyl-L-methionine-dependent methyltransferase that acts as a component of the wybutosine biosynthesis pathway. Wybutosine is a hyper modified guanosine with a tricyclic base found at the 3'-position adjacent to the anticodon of eukaryotic phenylalanine tRNA. May methylate the carboxyl group of leucine residues to form alpha-leucine ester residues. The polypeptide is tRNA wybutosine-synthesizing protein 4 (Lcmt2) (Rattus norvegicus (Rat)).